The chain runs to 301 residues: MRIAILSRNENLYSTMRLKQAGEARGHEVDVIDTLHCYMDITSNNPKIRYKGEELPQYDAIIPRIGASVTFYGTAVVRQFEMMGTFVVNESVAISRSRDKLRSLQLLSRKGIGLPRTGFAHHPDNIQDVIRNVGGAPLVIKLLEGTQGIGVVLAETNKAAESVIEAFMGLKANIMVQEFIEEAKGADIRCFVVGNKVIAAMKRQAKEGEFRSNLHRGGSAQLVRLSKEERATAINAAKVMGLNLCGVDILQSKNGPVVMEVNSSPGLEGIEQATNKDVAGMIYEFIEKNAKPNSNRTKGRG.

The region spanning 104–287 is the ATP-grasp domain; that stretch reads LQLLSRKGIG…VAGMIYEFIE (184 aa). Residues K141, 178 to 179, D187, and 211 to 213 each bind ATP; these read EF and RSN. Mg(2+)-binding residues include D248, E260, and N262. Residues D248, E260, and N262 each contribute to the Mn(2+) site.

This sequence belongs to the RimK family. It depends on Mg(2+) as a cofactor. Mn(2+) is required as a cofactor.

This Vibrio vulnificus (strain CMCP6) protein is Probable alpha-L-glutamate ligase.